Consider the following 367-residue polypeptide: Protein valois (367 aa).

WD repeat units follow at residues glutamine 101–glutamine 139, alanine 152–threonine 192, and serine 198–threonine 238. The segment at leucine 309–lysine 367 is interaction with csul.

In terms of assembly, interacts with csul and tud. As to expression, in oocytes, localizes to pole plasm and nuage (at protein level). Expressed stronger in the germline than in somatic cells. In the germarium it sometimes concentrates in perinuclear aggregates that disappear by stage 2 of oogenesis. At later stages, it is uniformly distributed in the nurse cells and oocyte, as well as in young embryos, with no particular enrichment at the posterior or inside the pole cells (at protein level).

The protein localises to the cytoplasm. Involved in specific localization of cytoplasmic proteins during the formation of pole plasm. Required for synthesis and/or stability of oskar protein (osk) and localization of tudor (tud) in both the nuage and posterior pole of the oocyte. Required for normal posterior localization of osk in later stages of oogenesis and for posterior localization of the vasa (vas) protein during the entire process of pole plasm assembly. May act by regulating the complex that contains the arginine N-methyltransferase csul. The protein is Protein valois (vls) of Drosophila melanogaster (Fruit fly).